The following is a 309-amino-acid chain: MNTLDETLLKEIISSNKKYTNYGQVASYIPELKNARRNDLGICIIDSENNLYSAGNCSTKFTIQSISKPIVLAMALMDNDWEDVFSNVGMEPSGDPFNSIMKLEINDTKKPCNPMINAGAIVTTSLINGSCLEEKEERMLSFFRKLAKNDNIGINYDVYKSEKMTGDRNRAMAYLLKSDGFIRGNVEDVLDLYFKQCSIEIDSVDLARIGINLANYGVDIENGEHLMSEMVSRIVKTFMMTCGMYDASGEFAIKVGIPAKSGVGGGIMASVPGRMGIGVYGPALDKKGNSVAGVKVLEELSNKLKLNIF.

Residues serine 65, asparagine 117, glutamate 162, asparagine 169, tyrosine 193, tyrosine 245, and valine 263 each contribute to the substrate site.

It belongs to the glutaminase family. Homotetramer.

It carries out the reaction L-glutamine + H2O = L-glutamate + NH4(+). The sequence is that of Glutaminase from Clostridioides difficile (strain 630) (Peptoclostridium difficile).